Here is a 239-residue protein sequence, read N- to C-terminus: mRNA turnover protein 4 homolog (239 aa).

Residues 216-239 (QQMDDDLPESAPESEGESEEEDDS) form a disordered region. A compositionally biased stretch (acidic residues) spans 218–239 (MDDDLPESAPESEGESEEEDDS). A phosphoserine mark is found at serine 225, serine 229, and serine 233.

This sequence belongs to the universal ribosomal protein uL10 family. In terms of assembly, associates with the pre-60S ribosomal particle. Interacts with MINAS-60 (product of an alternative open reading frame of RBM10).

The protein resides in the nucleus. The protein localises to the nucleolus. It localises to the cytoplasm. In terms of biological role, component of the ribosome assembly machinery. Nuclear paralog of the ribosomal protein P0, it binds pre-60S subunits at an early stage of assembly in the nucleolus, and is replaced by P0 in cytoplasmic pre-60S subunits and mature 80S ribosomes. The polypeptide is mRNA turnover protein 4 homolog (Mrto4) (Mus musculus (Mouse)).